A 1000-amino-acid chain; its full sequence is C-module-binding factor A (1000 aa).

The region spanning 113–280 (PREWQEYLSH…ISYFSSLPHT (168 aa)) is the JmjC domain. Residues 489 to 544 (KIKCHRCEKRFKKFSIIFCTNCNARFCEQCVVNTFGQNFQVLMKRNEWECFCCKGL) form a PHD-type; atypical zinc finger. The segment at 492 to 542 (CHRCEKRFKKFSIIFCTNCNARFCEQCVVNTFGQNFQVLMKRNEWECFCCK) adopts an RING-type; degenerate zinc-finger fold. Disordered stretches follow at residues 561–647 (RILN…SSYS) and 660–818 (SYGS…KNLK). Low complexity-rich tracts occupy residues 574-647 (NNNN…SSYS), 660-683 (SYGS…NNNN), 700-710 (SSSSGSGSSNS), 732-751 (NNNN…NNHH), and 760-789 (NNNN…STST). Basic and acidic residues predominate over residues 805 to 818 (DNDKPKGRPPKNLK). Positions 810–818 (KGRPPKNLK) form a DNA-binding region, a.T hook.

In terms of assembly, monomer.

The protein localises to the nucleus. Its function is as follows. Transcriptional regulator involved in phagocytosis and pinocytosis. Both activates and represses transcription. Regulates expression of acaA, carA, pkaC, csaA, cotB and lagC. Promotes amplification of the tRNA gene-associated retrotransposon TRE5-A, a mobile genetic element formerly called as Dictyostelium repetitive element (DRE). Suppresses agnC and agnE encoding argonaute proteins which are part of a RNA interference pathway controlling TRE5-A amplification. Required for amplification of both sense and antisense RNA transcripts, but does not activate their promoters found in A-module and C-module of the TRE5-A, respectively. Nevertheless, binds to distinct DNA sequences containing A and T stretches within the C-module in vitro. This chain is C-module-binding factor A, found in Dictyostelium discoideum (Social amoeba).